The primary structure comprises 318 residues: uncharacterized protein (318 aa).

A coiled-coil region spans residues 67-157 (LAFDELEKEK…SLKAIQTSQE (91 aa)). A disordered region spans residues 172–318 (ESTNKVEKNA…KGFFARLFNL (147 aa)). Basic and acidic residues-rich tracts occupy residues 175–193 (NKVEKNAVTEDKADSKDSK) and 219–236 (KVDKEDQISATEAIEKAS). Residues 237-248 (VEQSKNGNAAET) show a composition bias toward polar residues. 2 stretches are compositionally biased toward basic and acidic residues: residues 249-274 (SNKEATIDAEAQHDAEQQVAEAHAEA) and 300-310 (SEPKPQEEKKG).

This is an uncharacterized protein from Staphylococcus aureus (strain MW2).